A 167-amino-acid polypeptide reads, in one-letter code: Small ribosomal subunit protein uS5 (167 aa).

The S5 DRBM domain occupies 12–75 (LEERVVTINR…EDAKKNMVLV (64 aa)).

This sequence belongs to the universal ribosomal protein uS5 family. In terms of assembly, part of the 30S ribosomal subunit. Contacts proteins S4 and S8.

With S4 and S12 plays an important role in translational accuracy. In terms of biological role, located at the back of the 30S subunit body where it stabilizes the conformation of the head with respect to the body. The sequence is that of Small ribosomal subunit protein uS5 from Listeria monocytogenes serotype 4b (strain F2365).